A 102-amino-acid polypeptide reads, in one-letter code: Large ribosomal subunit protein uL23c (102 aa).

The protein belongs to the universal ribosomal protein uL23 family. Part of the 50S ribosomal subunit.

It is found in the plastid. Its subcellular location is the chloroplast. Functionally, binds to 23S rRNA. The chain is Large ribosomal subunit protein uL23c (rpl23) from Phaeodactylum tricornutum (strain CCAP 1055/1).